Consider the following 104-residue polypeptide: Thioredoxin (104 aa).

Residues 2–104 (AIVKVTDSNF…NLAEVLDKHL (103 aa)) form the Thioredoxin domain. Cys29 and Cys32 are disulfide-bonded.

It belongs to the thioredoxin family.

Functionally, component of the thioredoxin-thioredoxin reductase system. Participates in various redox reactions through the reversible oxidation of its active center dithiol to a disulfide and catalyzes dithiol-disulfide exchange reactions. This is Thioredoxin (trxA) from Staphylococcus haemolyticus (strain JCSC1435).